The primary structure comprises 268 residues: Shikimate dehydrogenase (NADP(+)) (268 aa).

Shikimate contacts are provided by residues 13 to 15 (SLS) and T60. Catalysis depends on K64, which acts as the Proton acceptor. Position 76 (E76) interacts with NADP(+). Shikimate contacts are provided by N85 and D100. Residues 124–128 (GAGGA), 148–153 (NRTMAR), and I209 contribute to the NADP(+) site. A shikimate-binding site is contributed by Y211. Residue G232 participates in NADP(+) binding.

The protein belongs to the shikimate dehydrogenase family. In terms of assembly, homodimer.

It catalyses the reaction shikimate + NADP(+) = 3-dehydroshikimate + NADPH + H(+). It functions in the pathway metabolic intermediate biosynthesis; chorismate biosynthesis; chorismate from D-erythrose 4-phosphate and phosphoenolpyruvate: step 4/7. Functionally, involved in the biosynthesis of the chorismate, which leads to the biosynthesis of aromatic amino acids. Catalyzes the reversible NADPH linked reduction of 3-dehydroshikimate (DHSA) to yield shikimate (SA). This chain is Shikimate dehydrogenase (NADP(+)), found in Staphylococcus aureus (strain MRSA252).